The sequence spans 376 residues: Histidinol dehydrogenase (376 aa).

Residues Y100 and N182 each contribute to the NAD(+) site. The substrate site is built by S205, Q227, and H230. Zn(2+) is bound by residues Q227 and H230. Residues E275 and H276 each act as proton acceptor in the active site. The substrate site is built by H276, D309, E363, and H368. D309 lines the Zn(2+) pocket. Position 368 (H368) interacts with Zn(2+).

This sequence belongs to the histidinol dehydrogenase family. Zn(2+) serves as cofactor.

It catalyses the reaction L-histidinol + 2 NAD(+) + H2O = L-histidine + 2 NADH + 3 H(+). It functions in the pathway amino-acid biosynthesis; L-histidine biosynthesis; L-histidine from 5-phospho-alpha-D-ribose 1-diphosphate: step 9/9. Its function is as follows. Catalyzes the sequential NAD-dependent oxidations of L-histidinol to L-histidinaldehyde and then to L-histidine. The sequence is that of Histidinol dehydrogenase from Thermococcus kodakarensis (strain ATCC BAA-918 / JCM 12380 / KOD1) (Pyrococcus kodakaraensis (strain KOD1)).